Here is a 634-residue protein sequence, read N- to C-terminus: Tyrosine-protein kinase transforming protein erbB (634 aa).

A Protein kinase domain is found at 132–399 (FKKVKVLGSG…KMARDPPRYL (268 aa)). Residues 138–146 (LGSGAFGTV) and lysine 165 each bind ATP. Residue aspartate 257 is the Proton acceptor of the active site.

Belongs to the protein kinase superfamily. Tyr protein kinase family. EGF receptor subfamily.

The enzyme catalyses L-tyrosyl-[protein] + ATP = O-phospho-L-tyrosyl-[protein] + ADP + H(+). The polypeptide is Tyrosine-protein kinase transforming protein erbB (V-ERBB) (Avian leukosis virus (ALV)).